The primary structure comprises 208 residues: MPDTRLRGLYLITPDSPDTTTLVAQVERALRGQPALLQYRSKQRDAALRLGQARQIAALCREAGVPFIVNDSLELALATDADGVHLGREDGDLDAARRALGPGRILGVTCYNEWPRAVAGCAAGADYVAFGAVFPSATKPAAVRAPLELFVRGRRELDVPLAAIGGITLDNAAQVIAAGASLLAVVSDVFDAPDPGARAAAYRTLFDA.

Residues 38–42 and Asn70 contribute to the 4-amino-2-methyl-5-(diphosphooxymethyl)pyrimidine site; that span reads QYRSK. Mg(2+) is bound by residues Asp71 and Asp90. Position 109 (Thr109) interacts with 4-amino-2-methyl-5-(diphosphooxymethyl)pyrimidine. 136–138 contacts 2-[(2R,5Z)-2-carboxy-4-methylthiazol-5(2H)-ylidene]ethyl phosphate; sequence SAT. Lys139 contacts 4-amino-2-methyl-5-(diphosphooxymethyl)pyrimidine. 2-[(2R,5Z)-2-carboxy-4-methylthiazol-5(2H)-ylidene]ethyl phosphate is bound by residues Gly166 and 186–187; that span reads VS.

It belongs to the thiamine-phosphate synthase family. It depends on Mg(2+) as a cofactor.

It catalyses the reaction 2-[(2R,5Z)-2-carboxy-4-methylthiazol-5(2H)-ylidene]ethyl phosphate + 4-amino-2-methyl-5-(diphosphooxymethyl)pyrimidine + 2 H(+) = thiamine phosphate + CO2 + diphosphate. The enzyme catalyses 2-(2-carboxy-4-methylthiazol-5-yl)ethyl phosphate + 4-amino-2-methyl-5-(diphosphooxymethyl)pyrimidine + 2 H(+) = thiamine phosphate + CO2 + diphosphate. The catalysed reaction is 4-methyl-5-(2-phosphooxyethyl)-thiazole + 4-amino-2-methyl-5-(diphosphooxymethyl)pyrimidine + H(+) = thiamine phosphate + diphosphate. Its pathway is cofactor biosynthesis; thiamine diphosphate biosynthesis; thiamine phosphate from 4-amino-2-methyl-5-diphosphomethylpyrimidine and 4-methyl-5-(2-phosphoethyl)-thiazole: step 1/1. Functionally, condenses 4-methyl-5-(beta-hydroxyethyl)thiazole monophosphate (THZ-P) and 2-methyl-4-amino-5-hydroxymethyl pyrimidine pyrophosphate (HMP-PP) to form thiamine monophosphate (TMP). This is Thiamine-phosphate synthase from Aromatoleum aromaticum (strain DSM 19018 / LMG 30748 / EbN1) (Azoarcus sp. (strain EbN1)).